The sequence spans 522 residues: Monogalactosyldiacylglycerol synthase, chloroplastic (522 aa).

The transit peptide at 1–98 (MSHPSTVTSE…RIPLGFSSIG (98 aa)) directs the protein to the chloroplast.

It belongs to the glycosyltransferase 28 family. Homodimer. Zn(2+) is required as a cofactor.

It is found in the plastid. The protein localises to the chloroplast inner membrane. It carries out the reaction a 1,2-diacyl-sn-glycerol + UDP-alpha-D-galactose = a 1,2-diacyl-3-O-(beta-D-galactosyl)-sn-glycerol + UDP + H(+). Inhibited by ortho-phenanthroline and UDP (competitive inhibitor relatively to UDP-Gal only) and inactivated by citraconic anhydride, tert-butoxycarbonyl-L-methionine hydrosuccinimidyl ester (SLR) and N-ethylmaleimide (NEM). Functionally, involved in the synthesis of the major structural component of photosynthetic membranes. The 1,2-diacylglycerol substrate preference is 18:2/18:2 &gt; 18:0/18:1 &gt; 18:1/18:1 &gt; 18:1/16:0 &gt; 16:0/18:2 &gt; 18:3/18:3 &gt; 16:0/18:1 &gt; 16:0/16:0 &gt; 18:0/18:0. In Spinacia oleracea (Spinach), this protein is Monogalactosyldiacylglycerol synthase, chloroplastic (MGD A).